The following is a 517-amino-acid chain: Crotonobetaine/carnitine--CoA ligase (517 aa).

This sequence belongs to the ATP-dependent AMP-binding enzyme family.

It catalyses the reaction 4-(trimethylamino)butanoate + ATP + CoA = 4-(trimethylamino)butanoyl-CoA + AMP + diphosphate. It carries out the reaction crotonobetaine + ATP + CoA = crotonobetainyl-CoA + AMP + diphosphate. The enzyme catalyses (R)-carnitine + ATP + CoA = (R)-carnitinyl-CoA + AMP + diphosphate. The protein operates within amine and polyamine metabolism; carnitine metabolism. Catalyzes the transfer of CoA to carnitine, generating the initial carnitinyl-CoA needed for the CaiB reaction cycle. Also has activity toward crotonobetaine and gamma-butyrobetaine. The polypeptide is Crotonobetaine/carnitine--CoA ligase (Escherichia coli (strain K12 / MC4100 / BW2952)).